The sequence spans 486 residues: Nuclear distribution protein PAC1 (486 aa).

Positions 66–99 (STVLRLQKKIIDLENEISNLNNIINSTNSDNNGI) form a coiled coil. 8 WD repeats span residues 119–158 (QCEN…NTIP), 164–205 (AHTR…RTLN), 206–246 (GHEH…SLKS), 249–291 (GHSE…GVAM), 294–328 (GHSH…FPTI), 329–368 (PLEL…IAPH), 389–428 (GHSS…ETGY), and 437–483 (GHDG…NSIK).

The protein belongs to the WD repeat LIS1/nudF family. Self-associates. Interacts with NDL1 and dynein.

It is found in the cytoplasm. It localises to the cytoskeleton. The protein localises to the spindle pole. Positively regulates the activity of the minus-end directed microtubule motor protein dynein. Plays a central role in positioning the mitotic spindle at the bud neck during cell division. Targets cytoplasmic dynein to microtubule plus ends, thereby promoting dynein-mediated microtubule sliding along the bud cortex and consequently the movement of the mitotic spindle to the bud neck. In Candida albicans (strain SC5314 / ATCC MYA-2876) (Yeast), this protein is Nuclear distribution protein PAC1.